A 463-amino-acid polypeptide reads, in one-letter code: MAARRDQVIHLLRQLQRASCKCPAHSHTYSQAPVTGRKTEYAFEMAVSNIRYGENVTQEIGMDLQNLGARNVCVMTDRNLVELSPVKAVLNSLVKNNVSFKLYDRVRVEPTDKSFMDAIEFAKKGQFDAYVGVGGGSVIDTCKAANLYSSSPGADFLDYVNPPIGKGKAVTVPLKPLIAVPTTSGTGSETTGIAIFDYEELKAKTGIASRAIKPTLGLIDPVHTLSMPERVVANSGFDVLCHSLESYTALPYNMRSPCPTNPINRPAYQGSNPISDVWAKHALRIVAKYLKRAVRNPDDREARFAMHLASSFAGVGFGNAGVHLCHGMSYPIAGHVKTYRAKDYEVDHPLVPHGLSVVLTSPAVFSFTALMCPERHLEAAEILGADIRTAKIKEAGLILADTLRKFLYDLNVDDGLAAVGYTTEDIPALVKGTLPQERVTKLSPRAHSEEELAGLFEASMKLY.

The protein belongs to the iron-containing alcohol dehydrogenase family. Hydroxyacid-oxoacid transhydrogenase subfamily.

Its subcellular location is the mitochondrion. It carries out the reaction (S)-3-hydroxybutanoate + 2-oxoglutarate = (R)-2-hydroxyglutarate + acetoacetate. The enzyme catalyses 4-hydroxybutanoate + 2-oxoglutarate = (R)-2-hydroxyglutarate + succinate semialdehyde. In terms of biological role, catalyzes the cofactor-independent reversible oxidation of gamma-hydroxybutyrate (GHB) to succinic semialdehyde (SSA) coupled to reduction of 2-ketoglutarate (2-KG) to D-2-hydroxyglutarate (D-2-HG). L-3-hydroxybutyrate (L-3-OHB) is also a substrate for HOT when using 2-KG as hydrogen acceptor, resulting in the formation of D-2-HG. This is Hydroxyacid-oxoacid transhydrogenase, mitochondrial (adhfe1) from Xenopus tropicalis (Western clawed frog).